A 68-amino-acid chain; its full sequence is Antimicrobial peptide UyCT3 (68 aa).

Positions 1 to 23 (MKNQFVLLLLAIVFLQMIFQSDA) are cleaved as a signal peptide. Phenylalanine 36 bears the Phenylalanine amide mark. A propeptide spanning residues 40 to 68 (GLENMDKFDELFDGDLSEADLDFLKELMR) is cleaved from the precursor.

It belongs to the non-disulfide-bridged peptide (NDBP) superfamily. Short antimicrobial peptide (group 4) family. The non-amidated UyCT3 does not show antimicrobial activity. As to expression, expressed by the venom gland.

The protein resides in the secreted. Its subcellular location is the target cell membrane. Antimicrobial peptide that inhibits the growth of Gram-positive (S.aureus, MIC=10 uM) and Gram-negative bacteria (E.coli, MIC=15 uM and P.aeruginosa, MIC=6 uM). It also shows 35% of hemolysis when 15 uM are tested (95% at 50 uM). The polypeptide is Antimicrobial peptide UyCT3 (Urodacus yaschenkoi (Inland robust scorpion)).